The sequence spans 653 residues: MSRFFKSAAFPILIVVVLAFFAQRLINPGDSGPRYDYSTFQQDLSEGNVKSAVVKTKGNLLEVTLKSPANQKHEVGYVPDNGNTLVGQLERERVAFDIEGTKSNGWLSLLTYVLPFLIFIGFWIFLMNQVQGGGSKVMSFGKSRARRLSVDSPKITFRDVAGADEAVEELHEIKEFLENPKKFQALGARIPKGVLLYGPPGTGKTLLARAVAGEAGVPFFSISGSDFVEMFVGVGASRVRDLFEQAKQNAPCIIFMDEIDAVGRHRGAGMGGGHDEREQTLNQLLVEMDGFEAKDNIIMIAATNRPDILDPALLRPGRFDRQVTVDRPDRKGRSKILEVHTRGKPLAREIDIDALAGQTPGFTGADLANLVNEAALLAARTGKREITQVELEEGIMRVIAGPEKKTRVMSSEERRITAYHEMGHALVGHFLEHADPVHKISVIGRGQALGYTISMPQEDKFLTTRAALGDTMAMTLGGRAAEEIIFGEITTGASNDLEKVTGTAKQMVMRFGMSEKLGPRVFGHDQSQPFLGREFSSQADYSDEIAREIDDEIRRIVETAHQSAKDILTEHRESLVYISEILIKRETIEKDQFEALVDGRTEEEVFGAEASPPPDVPLPPATERGRDTPRPLPRPGLAGGAAEMHFPERPELA.

Residues 1–7 (MSRFFKS) are Cytoplasmic-facing. The helical transmembrane segment at 8–28 (AAFPILIVVVLAFFAQRLINP) threads the bilayer. Topologically, residues 29-105 (GDSGPRYDYS…FDIEGTKSNG (77 aa)) are extracellular. The helical transmembrane segment at 106 to 126 (WLSLLTYVLPFLIFIGFWIFL) threads the bilayer. The Cytoplasmic segment spans residues 127–653 (MNQVQGGGSK…MHFPERPELA (527 aa)). 198–205 (GPPGTGKT) contacts ATP. H420 lines the Zn(2+) pocket. Residue E421 is part of the active site. Residues H424 and D496 each contribute to the Zn(2+) site. The disordered stretch occupies residues 603 to 653 (EEVFGAEASPPPDVPLPPATERGRDTPRPLPRPGLAGGAAEMHFPERPELA). Positions 611–620 (SPPPDVPLPP) are enriched in pro residues.

This sequence in the central section; belongs to the AAA ATPase family. In the C-terminal section; belongs to the peptidase M41 family. As to quaternary structure, homohexamer. Zn(2+) is required as a cofactor.

It localises to the cell membrane. Functionally, acts as a processive, ATP-dependent zinc metallopeptidase for both cytoplasmic and membrane proteins. Plays a role in the quality control of integral membrane proteins. In Conexibacter woesei (strain DSM 14684 / CCUG 47730 / CIP 108061 / JCM 11494 / NBRC 100937 / ID131577), this protein is ATP-dependent zinc metalloprotease FtsH 1.